Consider the following 281-residue polypeptide: Probable endonuclease 4 (281 aa).

Residues His69, His109, Glu145, Asp179, His182, His216, Asp229, His231, and Glu261 each coordinate Zn(2+).

The protein belongs to the AP endonuclease 2 family. The cofactor is Zn(2+).

The enzyme catalyses Endonucleolytic cleavage to 5'-phosphooligonucleotide end-products.. In terms of biological role, endonuclease IV plays a role in DNA repair. It cleaves phosphodiester bonds at apurinic or apyrimidinic (AP) sites, generating a 3'-hydroxyl group and a 5'-terminal sugar phosphate. In Nautilia profundicola (strain ATCC BAA-1463 / DSM 18972 / AmH), this protein is Probable endonuclease 4.